Reading from the N-terminus, the 368-residue chain is Protein mab-21-like (368 aa).

It belongs to the mab-21 family.

The chain is Protein mab-21-like from Drosophila melanogaster (Fruit fly).